The chain runs to 330 residues: Ribosomal RNA small subunit methyltransferase C (330 aa).

This sequence belongs to the methyltransferase superfamily. RsmC family. As to quaternary structure, monomer.

The protein localises to the cytoplasm. It catalyses the reaction guanosine(1207) in 16S rRNA + S-adenosyl-L-methionine = N(2)-methylguanosine(1207) in 16S rRNA + S-adenosyl-L-homocysteine + H(+). In terms of biological role, specifically methylates the guanine in position 1207 of 16S rRNA in the 30S particle. In Haemophilus influenzae (strain PittEE), this protein is Ribosomal RNA small subunit methyltransferase C.